The chain runs to 425 residues: Probable G-protein coupled receptor 63 (425 aa).

The Extracellular segment spans residues 1–87; it reads MVVSGVLTAP…VFKSLNLAVQ (87 aa). Asparagine 22, asparagine 34, and asparagine 68 each carry an N-linked (GlcNAc...) asparagine glycan. A helical transmembrane segment spans residues 88–112; the sequence is IILSAIMIFILFVSFLGNLVVCLMV. The Cytoplasmic segment spans residues 113–123; the sequence is YQKAAMRSAIN. Residues 124 to 148 traverse the membrane as a helical segment; it reads ILLASLAFADMLLAVLNMPFALVTI. Residues 149–165 are Extracellular-facing; that stretch reads LTTRWIFGKFFCRLSAM. Residues 166-190 form a helical membrane-spanning segment; it reads FFWLFVIEGVAILLIISIDRFLIIV. Over 191–202 the chain is Cytoplasmic; that stretch reads QRQDKLNPYRAK. Residues 203-222 form a helical membrane-spanning segment; it reads VLIAVSWATAFSVAFPLAVG. Residues 223–247 are Extracellular-facing; it reads NPDLQIPSRAPQCVFGYTTNSGYQA. A helical membrane pass occupies residues 248–272; that stretch reads YVILISLISFFIPFLVILYSFMGIL. Residues 273–321 are Cytoplasmic-facing; that stretch reads NTLRHNALRIHSYPEGICLSQASKLGLMSLQRPFQMSIDMGFKTRAFTT. Residues 322 to 345 traverse the membrane as a helical segment; the sequence is ILILFAVFIVCWAPFTTYSLVATF. Residues 346-357 lie on the Extracellular side of the membrane; sequence SKHFYYQHNFFE. A helical membrane pass occupies residues 358–379; sequence ISTWLLWLCYLKSALNPLIYYW. At 380-425 the chain is on the cytoplasmic side; the sequence is RIKKFHDACLDMMPKSFKFLPRLPGHTRRRIRPSAVYVCGEHRTVL.

This sequence belongs to the G-protein coupled receptor 1 family. Brain specific.

Its subcellular location is the cell membrane. Functionally, orphan receptor. May play a role in brain function. The protein is Probable G-protein coupled receptor 63 (Gpr63) of Mus musculus (Mouse).